The primary structure comprises 502 residues: UDP-N-acetylmuramoylalanine--D-glutamate ligase (502 aa).

An ATP-binding site is contributed by 129-135 (GTNGKTT). Residues 288–307 (APDETTSRRRKRDGAHTPDI) are disordered.

The protein belongs to the MurCDEF family.

It is found in the cytoplasm. The enzyme catalyses UDP-N-acetyl-alpha-D-muramoyl-L-alanine + D-glutamate + ATP = UDP-N-acetyl-alpha-D-muramoyl-L-alanyl-D-glutamate + ADP + phosphate + H(+). It participates in cell wall biogenesis; peptidoglycan biosynthesis. Its function is as follows. Cell wall formation. Catalyzes the addition of glutamate to the nucleotide precursor UDP-N-acetylmuramoyl-L-alanine (UMA). This Burkholderia ambifaria (strain ATCC BAA-244 / DSM 16087 / CCUG 44356 / LMG 19182 / AMMD) (Burkholderia cepacia (strain AMMD)) protein is UDP-N-acetylmuramoylalanine--D-glutamate ligase.